Consider the following 146-residue polypeptide: MGEDGKLYIVREEILSDSIKKTIKVKELLESGKAKTINEAVKQVGISRSAFYKYRDYVFPFSKFSKGKIITFSMVLEHMPGVLSSILDVVAKERGNVVTINQSIPSMGVASVTISIDTQYMEISIEDFIEELSKQPGVRKIEVLGE.

An ACT domain is found at 71–146 (TFSMVLEHMP…GVRKIEVLGE (76 aa)).

The protein belongs to the UPF0735 family.

The sequence is that of UPF0735 ACT domain-containing protein TTE2621 from Caldanaerobacter subterraneus subsp. tengcongensis (strain DSM 15242 / JCM 11007 / NBRC 100824 / MB4) (Thermoanaerobacter tengcongensis).